Consider the following 825-residue polypeptide: Putative NAD(+)--arginine ADP-ribosyltransferase Mav (825 aa).

Positions 435-673 (ALKGLKKPPG…SGSDHHLPLH (239 aa)) are disordered. Pro residues-rich tracts occupy residues 443–457 (PGVP…PAAP) and 468–491 (SGKP…PLPH). The span at 560–579 (PAADTPAPSAPAASMSAASG) shows a compositional bias: low complexity. Pro residues predominate over residues 580–589 (PPMPPTPSLP). Low complexity predominate over residues 590 to 599 (EPASLPSGPS). The region spanning 650–825 (KNANGHGPHD…GRTIIEMIER (176 aa)) is the TR mART core domain. A compositionally biased stretch (basic and acidic residues) spans 656 to 670 (GPHDASLDSGSDHHL). NAD(+) contacts are provided by residues 687–699 (TGPG…FALR), 730–733 (RGTN), and glutamate 750. Arginine 730 is a catalytic residue. Residues serine 755 and glutamate 795 contribute to the active site. An NAD(+)-binding site is contributed by glutamate 795.

The protein belongs to the Arg-specific ADP-ribosyltransferase family.

The protein resides in the secreted. It catalyses the reaction L-arginyl-[protein] + NAD(+) = N(omega)-(ADP-D-ribosyl)-L-arginyl-[protein] + nicotinamide + H(+). Functionally, a probable mono(ADP-ribosyl)transferase, it may ADP-ribosylate Arg in target protein(s). This Mycobacterium avium (strain 104) protein is Putative NAD(+)--arginine ADP-ribosyltransferase Mav.